The following is a 375-amino-acid chain: Digeranylgeranylglycerophospholipid reductase 1 (375 aa).

FAD is bound by residues alanine 13, glutamate 32, cysteine 43, alanine 44, glycine 46, arginine 92, alanine 116, aspartate 275, glycine 287, and leucine 288. Glycine 367 contacts a 2,3-bis-O-(geranylgeranyl)-sn-glycerol 1-phospholipid.

Belongs to the geranylgeranyl reductase family. DGGGPL reductase subfamily. The cofactor is FAD.

It carries out the reaction a 2,3-bis-O-phytanyl-sn-glycerol 1-phospholipid + 8 A = a 2,3-bis-O-(geranylgeranyl)-sn-glycerol 1-phospholipid + 8 AH2. The catalysed reaction is 2,3-bis-O-(phytanyl)-sn-glycerol 1-phosphate + 8 A = 2,3-bis-O-(geranylgeranyl)-sn-glycerol 1-phosphate + 8 AH2. It catalyses the reaction CDP-2,3-bis-O-(geranylgeranyl)-sn-glycerol + 8 AH2 = CDP-2,3-bis-O-(phytanyl)-sn-glycerol + 8 A. The enzyme catalyses archaetidylserine + 8 AH2 = 2,3-bis-O-phytanyl-sn-glycero-3-phospho-L-serine + 8 A. Its pathway is membrane lipid metabolism; glycerophospholipid metabolism. Its function is as follows. Is involved in the reduction of 2,3-digeranylgeranylglycerophospholipids (unsaturated archaeols) into 2,3-diphytanylglycerophospholipids (saturated archaeols) in the biosynthesis of archaeal membrane lipids. Catalyzes the formation of archaetidic acid (2,3-di-O-phytanyl-sn-glyceryl phosphate) from 2,3-di-O-geranylgeranylglyceryl phosphate (DGGGP) via the hydrogenation of each double bond of the isoprenoid chains. Is also probably able to reduce double bonds of geranyl groups in CDP-2,3-bis-O-(geranylgeranyl)-sn-glycerol and archaetidylserine, thus acting at various stages in the biosynthesis of archaeal membrane lipids. In Methanopyrus kandleri (strain AV19 / DSM 6324 / JCM 9639 / NBRC 100938), this protein is Digeranylgeranylglycerophospholipid reductase 1.